A 217-amino-acid polypeptide reads, in one-letter code: Adenylate kinase (217 aa).

G10 to T15 serves as a coordination point for ATP. Residues S30 to V59 form an NMP region. AMP-binding positions include T31, R36, E57–V59, G85–R88, and Q92. The tract at residues Y126–D163 is LID. Residue R127 coordinates ATP. The Zn(2+) site is built by C130 and C133. V136–Y137 provides a ligand contact to ATP. Residues C150 and C153 each coordinate Zn(2+). Positions 160 and 171 each coordinate AMP. ATP is bound at residue K199.

The protein belongs to the adenylate kinase family. As to quaternary structure, monomer.

The protein resides in the cytoplasm. The catalysed reaction is AMP + ATP = 2 ADP. Its pathway is purine metabolism; AMP biosynthesis via salvage pathway; AMP from ADP: step 1/1. In terms of biological role, catalyzes the reversible transfer of the terminal phosphate group between ATP and AMP. Plays an important role in cellular energy homeostasis and in adenine nucleotide metabolism. This chain is Adenylate kinase, found in Archaeoglobus fulgidus (strain ATCC 49558 / DSM 4304 / JCM 9628 / NBRC 100126 / VC-16).